Consider the following 465-residue polypeptide: Gamma-aminobutyric acid receptor subunit rho-2 (465 aa).

Positions 1–20 (MPYLMRLALVLFCLMALVES) are cleaved as a signal peptide. Topologically, residues 21–260 (RKPRRKRWTG…LYINFTLRRH (240 aa)) are extracellular. Residue R105 coordinates 4-aminobutanoate. The N-linked (GlcNAc...) asparagine glycan is linked to N120. S169 contacts 4-aminobutanoate. C178 and C192 are oxidised to a cystine. Residue E197 participates in 4-aminobutanoate binding. N-linked (GlcNAc...) asparagine glycosylation is present at N254. The chain crosses the membrane as a helical span at residues 261–281 (IFFFLLQTYFPATLMVMLSWV). The Cytoplasmic portion of the chain corresponds to 282–293 (SFWIDHRAVPAR). The chain crosses the membrane as a helical span at residues 294–314 (VSLGIMTVLTMSTIITGVNAS). The Extracellular portion of the chain corresponds to 315–325 (MPRVSYIRAVD). The chain crosses the membrane as a helical span at residues 326 to 346 (IYLWVSFVFVFLSVLEYAAVN). At 347–443 (YLTTLQEQKE…IFQNTHAIDK (97 aa)) the chain is on the cytoplasmic side. Residues 444-464 (YSRLIFPAFYIVFNLIYWSVF) form a helical membrane-spanning segment. Residue S465 is a topological domain, extracellular.

Belongs to the ligand-gated ion channel (TC 1.A.9) family. Gamma-aminobutyric acid receptor (TC 1.A.9.5) subfamily. GABRR2 sub-subfamily. In terms of assembly, three rho subunits (rho-1/GBRR1, rho-2/GBRR2 and rho-3/GBRR3) coassemble either to form functional homopentamers or heteropentamers. Rho-2 is unable to form a functional homopentamer. Interacts with SQSTM1. Expressed in the cerebellum.

The protein localises to the postsynaptic cell membrane. Its subcellular location is the cell membrane. The catalysed reaction is chloride(in) = chloride(out). Functionally, rho subunit of the pentameric ligand-gated chloride channels responsible for mediating the effects of gamma-aminobutyric acid (GABA), the major inhibitory neurotransmitter in the brain. Rho-containing GABA-gated chloride channels are a subclass of GABA(A) receptors (GABAARs) entirely composed of rho subunits, where GABA molecules bind at the rho intersubunit interfaces. When activated by GABA, rho-GABAARs selectively allow the flow of chloride anions across the cell membrane down their electrochemical gradient. Rho-2 GABAARs may contribute to the regulation of glial development in the cerebellum by controlling extrasynaptic transmission. Rho-2 GABAARs are also involved in neuronal tonic (extrasynaptic) and phasic (synaptic) transmission in the Purkinje neurons of the cerebellum. Rho-2 GABAARs expressed in retina may play a role in retinal neurotransmission. This Mus musculus (Mouse) protein is Gamma-aminobutyric acid receptor subunit rho-2.